A 559-amino-acid chain; its full sequence is Potassium-transporting ATPase potassium-binding subunit (559 aa).

Transmembrane regions (helical) follow at residues 5–25 (GFLL…PLGS), 27–47 (LARL…RILW), 63–83 (LLAL…LLFW), 132–152 (GLTV…FALI), 170–190 (LVRI…LFFI), 253–273 (LAQM…FGEA), 283–303 (LLWA…WAEV), 327–347 (FGVL…CGAV), 356–376 (ALGG…FGGV), 379–399 (GLYG…LMIG), 416–436 (MTAL…ALAM), 484–504 (LLAF…MAIA), and 524–544 (GALF…LTFI).

The protein belongs to the KdpA family. In terms of assembly, the system is composed of three essential subunits: KdpA, KdpB and KdpC.

The protein resides in the cell inner membrane. Its function is as follows. Part of the high-affinity ATP-driven potassium transport (or Kdp) system, which catalyzes the hydrolysis of ATP coupled with the electrogenic transport of potassium into the cytoplasm. This subunit binds the periplasmic potassium ions and delivers the ions to the membrane domain of KdpB through an intramembrane tunnel. The chain is Potassium-transporting ATPase potassium-binding subunit from Salmonella newport (strain SL254).